Consider the following 227-residue polypeptide: Lipoprotein-releasing system ATP-binding protein LolD (227 aa).

An ABC transporter domain is found at 7–227 (LQLTGVERHY…TISDGKIVDF (221 aa)). 43-50 (APSGTGKS) lines the ATP pocket.

It belongs to the ABC transporter superfamily. Lipoprotein translocase (TC 3.A.1.125) family. In terms of assembly, the complex is composed of two ATP-binding proteins (LolD) and two transmembrane proteins (LolC and LolE).

Its subcellular location is the cell inner membrane. Part of the ABC transporter complex LolCDE involved in the translocation of mature outer membrane-directed lipoproteins, from the inner membrane to the periplasmic chaperone, LolA. Responsible for the formation of the LolA-lipoprotein complex in an ATP-dependent manner. The sequence is that of Lipoprotein-releasing system ATP-binding protein LolD from Rhizobium johnstonii (strain DSM 114642 / LMG 32736 / 3841) (Rhizobium leguminosarum bv. viciae).